A 428-amino-acid polypeptide reads, in one-letter code: Histidine--tRNA ligase (428 aa).

The protein belongs to the class-II aminoacyl-tRNA synthetase family. In terms of assembly, homodimer.

It is found in the cytoplasm. It catalyses the reaction tRNA(His) + L-histidine + ATP = L-histidyl-tRNA(His) + AMP + diphosphate + H(+). The sequence is that of Histidine--tRNA ligase from Azotobacter vinelandii (strain DJ / ATCC BAA-1303).